Consider the following 322-residue polypeptide: Adenine deaminase (322 aa).

Zn(2+) contacts are provided by histidine 11, histidine 13, and histidine 189. The active-site Proton donor is the glutamate 192. Position 270 (aspartate 270) interacts with Zn(2+). Aspartate 271 is a binding site for substrate.

The protein belongs to the metallo-dependent hydrolases superfamily. Adenosine and AMP deaminases family. Adenine deaminase type 2 subfamily. Zn(2+) serves as cofactor.

It catalyses the reaction adenine + H2O + H(+) = hypoxanthine + NH4(+). Catalyzes the hydrolytic deamination of adenine to hypoxanthine. Plays an important role in the purine salvage pathway and in nitrogen catabolism. This chain is Adenine deaminase, found in Rhizobium rhizogenes (strain K84 / ATCC BAA-868) (Agrobacterium radiobacter).